A 201-amino-acid polypeptide reads, in one-letter code: Small ribosomal subunit protein uS4c (201 aa).

Positions 89-149 (MRLDNILFRL…DEQKSRALIQ (61 aa)) constitute an S4 RNA-binding domain.

It belongs to the universal ribosomal protein uS4 family. As to quaternary structure, part of the 30S ribosomal subunit. Contacts protein S5. The interaction surface between S4 and S5 is involved in control of translational fidelity.

It is found in the plastid. Its subcellular location is the chloroplast. Functionally, one of the primary rRNA binding proteins, it binds directly to 16S rRNA where it nucleates assembly of the body of the 30S subunit. With S5 and S12 plays an important role in translational accuracy. The sequence is that of Small ribosomal subunit protein uS4c (rps4) from Coffea arabica (Arabian coffee).